A 380-amino-acid chain; its full sequence is GPI-anchor transamidase (380 aa).

The signal sequence occupies residues 1–19 (MIVQFVALLLLNLLQIIAA). At 20-354 (ESSHTNNWAV…TRELKYKKHP (335 aa)) the chain is on the lumenal side. Active-site residues include His-145 and Cys-187. Asn-307 is a glycosylation site (N-linked (GlcNAc...) asparagine). The helical transmembrane segment at 355–375 (ISRIISAVVCISFSIGFPYYA) threads the bilayer. The Cytoplasmic portion of the chain corresponds to 376–380 (SKYLK).

Belongs to the peptidase C13 family. In terms of assembly, forms a complex with PIG-T homolog, PIG-U homolog and PIG-S homolog. The disulfide bond between PIGK/GPI8 and PIGT is important for normal enzyme activity.

It localises to the endoplasmic reticulum membrane. The protein operates within glycolipid biosynthesis; glycosylphosphatidylinositol-anchor biosynthesis. Mediates GPI anchoring in the endoplasmic reticulum, by replacing a protein's C-terminal GPI attachment signal peptide with a pre-assembled GPI. During this transamidation reaction, the GPI transamidase forms a carbonyl intermediate with the substrate protein. This is GPI-anchor transamidase (gpi8) from Schizosaccharomyces pombe (strain 972 / ATCC 24843) (Fission yeast).